The chain runs to 258 residues: Ribonuclease HII (258 aa).

The disordered stretch occupies residues 1–20 (MRVAPSGGPPHHHAMIRATP). The span at 10-20 (PHHHAMIRATP) shows a compositional bias: basic residues. The RNase H type-2 domain occupies 48–236 (WPVAGCDEVG…VVAARERHRA (189 aa)). A divalent metal cation-binding residues include aspartate 54, glutamate 55, and aspartate 145.

The protein belongs to the RNase HII family. Mn(2+) serves as cofactor. Mg(2+) is required as a cofactor.

Its subcellular location is the cytoplasm. It carries out the reaction Endonucleolytic cleavage to 5'-phosphomonoester.. Endonuclease that specifically degrades the RNA of RNA-DNA hybrids. This is Ribonuclease HII from Nitrobacter winogradskyi (strain ATCC 25391 / DSM 10237 / CIP 104748 / NCIMB 11846 / Nb-255).